A 105-amino-acid chain; its full sequence is Antitoxin YfjZ (105 aa).

It belongs to the CbeA/YafW/YfjZ antitoxin family.

In terms of biological role, antitoxin component of a type IV toxin-antitoxin (TA) system. Antitoxin that counteracts the effect of cognate toxin YpjF. Also counteracts the effect of non-cognate toxins CbtA and YfkI. This Escherichia coli (strain K12) protein is Antitoxin YfjZ (yfjZ).